The chain runs to 375 residues: MSKRDYYEVLGVARGASDEELKKAYRRCAMKHHPDRNPGDAAAEAAFKECKEAYEVLSDGNKRRAYDAHGHAAFEHGMGGGGGPGGPDMGDIFGDIFGNIFGGGAAGPRAARRGADVGYVLELDLEEAVAGIERRIEIPTLIECAPCHGSGSEDGKVETCGTCHGRGQVRIQRGIFAMQQSCPHCDGRGTLIQNPCKTCHGAGRVEEDKVLSIKVPAGVDTGDRIRLAGEGEAGPAGTPPGDLYVEVRVREHAIFQRDGDDLHCEVPIRISQAALGDTVRVATLGGEAEIRIPAETQTGKLFRLRGKGVRSVRSRSEGDLYCRVVVETPVNLTADQRELLQQFEATFTGEDARKHSPKSATFIDGVKGFWDRMTS.

The J domain maps to 5–70; sequence DYYEVLGVAR…NKRRAYDAHG (66 aa). The CR-type zinc finger occupies 131–208; that stretch reads GIERRIEIPT…CHGAGRVEED (78 aa). Residues Cys-144, Cys-147, Cys-160, Cys-163, Cys-182, Cys-185, Cys-196, and Cys-199 each contribute to the Zn(2+) site. CXXCXGXG motif repeat units lie at residues 144-151, 160-167, 182-189, and 196-203; these read CAPCHGSG, CGTCHGRG, CPHCDGRG, and CKTCHGAG.

Belongs to the DnaJ family. In terms of assembly, homodimer. Zn(2+) serves as cofactor.

It localises to the cytoplasm. Participates actively in the response to hyperosmotic and heat shock by preventing the aggregation of stress-denatured proteins and by disaggregating proteins, also in an autonomous, DnaK-independent fashion. Unfolded proteins bind initially to DnaJ; upon interaction with the DnaJ-bound protein, DnaK hydrolyzes its bound ATP, resulting in the formation of a stable complex. GrpE releases ADP from DnaK; ATP binding to DnaK triggers the release of the substrate protein, thus completing the reaction cycle. Several rounds of ATP-dependent interactions between DnaJ, DnaK and GrpE are required for fully efficient folding. Also involved, together with DnaK and GrpE, in the DNA replication of plasmids through activation of initiation proteins. In Xanthomonas axonopodis pv. citri (strain 306), this protein is Chaperone protein DnaJ.